Consider the following 72-residue polypeptide: Translation initiation factor IF-1 (72 aa).

Residues 1–72 (MAGNDVIEIE…TKGRITYRHK (72 aa)) form the S1-like domain.

It belongs to the IF-1 family. In terms of assembly, component of the 30S ribosomal translation pre-initiation complex which assembles on the 30S ribosome in the order IF-2 and IF-3, IF-1 and N-formylmethionyl-tRNA(fMet); mRNA recruitment can occur at any time during PIC assembly.

The protein localises to the cytoplasm. Functionally, one of the essential components for the initiation of protein synthesis. Stabilizes the binding of IF-2 and IF-3 on the 30S subunit to which N-formylmethionyl-tRNA(fMet) subsequently binds. Helps modulate mRNA selection, yielding the 30S pre-initiation complex (PIC). Upon addition of the 50S ribosomal subunit IF-1, IF-2 and IF-3 are released leaving the mature 70S translation initiation complex. The polypeptide is Translation initiation factor IF-1 (Oenococcus oeni (strain ATCC BAA-331 / PSU-1)).